We begin with the raw amino-acid sequence, 312 residues long: Ribosomal protein L11 methyltransferase (312 aa).

Residues Thr-162, Gly-183, Asp-205, and Asn-248 each coordinate S-adenosyl-L-methionine.

The protein belongs to the methyltransferase superfamily. PrmA family.

The protein resides in the cytoplasm. It carries out the reaction L-lysyl-[protein] + 3 S-adenosyl-L-methionine = N(6),N(6),N(6)-trimethyl-L-lysyl-[protein] + 3 S-adenosyl-L-homocysteine + 3 H(+). Functionally, methylates ribosomal protein L11. The chain is Ribosomal protein L11 methyltransferase from Bacillus anthracis (strain A0248).